An 805-amino-acid chain; its full sequence is Leucine--tRNA ligase (805 aa).

Residues 40 to 51 carry the 'HIGH' region motif; it reads PYPSGSGLHVGH. The short motif at 576–580 is the 'KMSKS' region element; that stretch reads KMSKS. Residue lysine 579 coordinates ATP.

It belongs to the class-I aminoacyl-tRNA synthetase family.

It localises to the cytoplasm. The catalysed reaction is tRNA(Leu) + L-leucine + ATP = L-leucyl-tRNA(Leu) + AMP + diphosphate. In Chloroherpeton thalassium (strain ATCC 35110 / GB-78), this protein is Leucine--tRNA ligase.